Here is a 303-residue protein sequence, read N- to C-terminus: Ornithine carbamoyltransferase (303 aa).

Carbamoyl phosphate-binding positions include 52–55 (STRT), Gln79, Arg103, and 130–133 (HPCQ). Residues Asn161, Asp222, and 226–227 (SM) contribute to the L-ornithine site. Carbamoyl phosphate is bound by residues 262 to 263 (CL) and Lys290.

It belongs to the aspartate/ornithine carbamoyltransferase superfamily. OTCase family.

It localises to the cytoplasm. It catalyses the reaction carbamoyl phosphate + L-ornithine = L-citrulline + phosphate + H(+). The protein operates within amino-acid biosynthesis; L-arginine biosynthesis; L-arginine from L-ornithine and carbamoyl phosphate: step 1/3. Reversibly catalyzes the transfer of the carbamoyl group from carbamoyl phosphate (CP) to the N(epsilon) atom of ornithine (ORN) to produce L-citrulline. The sequence is that of Ornithine carbamoyltransferase from Desulfotalea psychrophila (strain LSv54 / DSM 12343).